Reading from the N-terminus, the 329-residue chain is Phosphate acyltransferase (329 aa).

This sequence belongs to the PlsX family. Homodimer. Probably interacts with PlsY.

It localises to the cytoplasm. It carries out the reaction a fatty acyl-[ACP] + phosphate = an acyl phosphate + holo-[ACP]. The protein operates within lipid metabolism; phospholipid metabolism. Functionally, catalyzes the reversible formation of acyl-phosphate (acyl-PO(4)) from acyl-[acyl-carrier-protein] (acyl-ACP). This enzyme utilizes acyl-ACP as fatty acyl donor, but not acyl-CoA. The polypeptide is Phosphate acyltransferase (Anoxybacillus flavithermus (strain DSM 21510 / WK1)).